The primary structure comprises 1340 residues: Early transcription factor large subunit homolog (1340 aa).

The protein belongs to the asfivirus G1340L family.

Its subcellular location is the virion. Functionally, putative initation factor. The sequence is that of Early transcription factor large subunit homolog from African swine fever virus (strain Badajoz 1971 Vero-adapted) (Ba71V).